The chain runs to 132 residues: Protein C10 (132 aa).

A2 bears the N-acetylalanine mark.

It belongs to the UPF0456 family.

It localises to the cytoplasm. Functionally, in brain, may be required for corpus callosum development. This chain is Protein C10, found in Bos taurus (Bovine).